Consider the following 785-residue polypeptide: Gamma-interferon-inducible protein 16 (785 aa).

Residues Tyr-5–Leu-92 enclose the Pyrin domain. Lys-45 bears the N6-acetyllysine mark. Basic residues predominate over residues Lys-88–Lys-99. The tract at residues Lys-88–Arg-196 is disordered. Residue Ser-95 is modified to Phosphoserine. The short motif at Arg-96–Lys-100 is the Nuclear localization signal element. Lys-99 is subject to N6-acetyllysine. Residues Ala-104 to Thr-114 show a composition bias toward low complexity. At Ser-106 the chain carries Phosphoserine. Residue Lys-116 forms a Glycyl lysine isopeptide (Lys-Gly) (interchain with G-Cter in SUMO2) linkage. An N6-acetyllysine; alternate modification is found at Lys-128. Lys-128 is covalently cross-linked (Glycyl lysine isopeptide (Lys-Gly) (interchain with G-Cter in SUMO2); alternate). Short sequence motifs (nuclear localization signal) lie at residues Lys-128–Lys-131, Lys-134–Lys-136, and Lys-140–Lys-143. The segment covering Ser-166–Thr-182 has biased composition (low complexity). Ser-168 and Ser-174 each carry phosphoserine. An interaction with TP53 C-terminus region spans residues Gln-192–Asn-393. In terms of domain architecture, HIN-200 1 spans Ala-193–Asn-393. An N6-acetyllysine modification is found at Lys-214. A disordered region spans residues Ile-388–Thr-442. The span at Gln-406–Pro-422 shows a compositional bias: polar residues. Lys-444 and Lys-451 each carry N6-acetyllysine. One can recognise an HIN-200 2 domain in the interval Glu-566 to Lys-765. Positions Asp-571 to Asn-766 are interaction with TP53 core domain. Residue Ser-575 is modified to Phosphoserine. Lys-598 and Lys-614 each carry N6-acetyllysine. A Glycyl lysine isopeptide (Lys-Gly) (interchain with G-Cter in SUMO2) cross-link involves residue Lys-683. At Ser-780 the chain carries Phosphoserine.

This sequence belongs to the HIN-200 family. As to quaternary structure, forms homooligomers. Interacts with TMEM173, AIM2, PYCARD and CASP1. Interacts with BRCA1, TP53, E2F1, RB1 and SP1. Interacts with MTA1. Interacts with MTA1. Interacts with PYDC5. Lysine acetylation in the multipartite nuclear localization signal (NLS) regulates the subcellular location. Post-translationally, phosphorylated on Ser and Thr.

The protein resides in the nucleus. It is found in the cytoplasm. Functionally, binds double-stranded DNA. Binds preferentially to supercoiled DNA and cruciform DNA structures. Seems to be involved in transcriptional regulation. May function as a transcriptional repressor. Could have a role in the regulation of hematopoietic differentiation through activation of unknown target genes. Controls cellular proliferation by modulating the functions of cell cycle regulatory factors including p53/TP53 and the retinoblastoma protein. May be involved in TP53-mediated transcriptional activation by enhancing TP53 sequence-specific DNA binding and modulating TP53 phosphorylation status. Seems to be involved in energy-level-dependent activation of the ATM/ AMPK/TP53 pathway coupled to regulation of autophagy. May be involved in regulation of TP53-mediated cell death also involving BRCA1. May be involved in the senescence of prostate epithelial cells. Involved in innate immune response by recognizing viral dsDNA in the cytosol and probably in the nucleus. After binding to viral DNA in the cytoplasm recruits TMEM173/STING and mediates the induction of IFN-beta. Has anti-inflammatory activity and inhibits the activation of the AIM2 inflammasome, probably via association with AIM2. Proposed to bind viral DNA in the nucleus and to induce the formation of nuclear caspase-1-activating inflammasome formation via association with PYCARD. Inhibits replication of herpesviruses probably by interfering with promoter recruitment of members of the Sp1 family of transcription factors. This chain is Gamma-interferon-inducible protein 16 (IFI16), found in Pongo abelii (Sumatran orangutan).